A 262-amino-acid polypeptide reads, in one-letter code: uncharacterized protein (262 aa).

An S4 RNA-binding domain is found at 6 to 70 (LRINQFLAHY…LKNKKFSVLV (65 aa)). The active-site Nucleophile is the aspartate 108.

This sequence belongs to the pseudouridine synthase RsuA family.

The enzyme catalyses a uridine in RNA = a pseudouridine in RNA. This is an uncharacterized protein from Helicobacter pylori (strain ATCC 700392 / 26695) (Campylobacter pylori).